Reading from the N-terminus, the 246-residue chain is MGDREQLLQRARLAEQAERYDDMASAMKAVTELNEPLSNEDRNLLSVAYKNVVGARRSSWRVISSIEQKTMADGNEKKLEKVKAYREKIEKELETVCNDVLSLLDKFLIKNCNDFQYESKVFYLKMKGDYYRYLAEVASGEKKNSVVEASEAAYKEAFEISKEQMQPTHPIRLGLALNFSVFYYEIQNAPEQACLLAKQAFDDAIAELDTLNEDSYKDSTLIMQLLRDNLTLWTSDQQDEEAGEGN.

Glycine 2 carries the post-translational modification N-acetylglycine. A phosphoserine mark is found at serine 25 and serine 59.

This sequence belongs to the 14-3-3 family. As to quaternary structure, homodimer. Interacts with many nuclear hormone receptors and cofactors including AR, ESR1, ESR2, MC2R, NR3C1, NRIP1, PPARBP and THRA. Interacts with ABL1 (phosphorylated form); the interaction retains it in the cytoplasm. Interacts with ARHGEF28 and CDK16. Weakly interacts with CDKN1B. Interacts with GAB2. Interacts with KCNK18 in a phosphorylation-dependent manner. Interacts with SAMSN1. Interacts with the 'Ser-241' phosphorylated form of PDPK1. Interacts with the 'Thr-369' phosphorylated form of DAPK2. Interacts with PI4KB, TBC1D22A and TBC1D22B. Interacts with SLITRK1. Interacts with MEFV. Phosphorylated on Ser-59 by protein kinase C delta type catalytic subunit in a sphingosine-dependent fashion. As to expression, expressed mainly in the brain and present in other tissues albeit at lower levels.

In terms of biological role, adapter protein implicated in the regulation of a large spectrum of both general and specialized signaling pathways. Binds to a large number of partners, usually by recognition of a phosphoserine or phosphothreonine motif. Binding generally results in the modulation of the activity of the binding partner. Negatively regulates the kinase activity of PDPK1. The sequence is that of 14-3-3 protein eta (YWHAH) from Homo sapiens (Human).